The primary structure comprises 229 residues: Potassium/proton antiporter CemA (229 aa).

4 consecutive transmembrane segments (helical) span residues 7–27 (FTSLLYLASIVFLPWWISLSF), 114–134 (IICFVILSGYSILGNEELVIL), 145–165 (LSDTIKAFWILLLTDFFIGFH), and 189–209 (ILSSLVCIFPVILDTLFKFWV).

Belongs to the CemA family.

The protein localises to the plastid. It is found in the chloroplast inner membrane. The enzyme catalyses K(+)(in) + H(+)(out) = K(+)(out) + H(+)(in). In terms of biological role, contributes to K(+)/H(+) antiport activity by supporting proton efflux to control proton extrusion and homeostasis in chloroplasts in a light-dependent manner to modulate photosynthesis. Prevents excessive induction of non-photochemical quenching (NPQ) under continuous-light conditions. Indirectly promotes efficient inorganic carbon uptake into chloroplasts. The chain is Potassium/proton antiporter CemA from Daucus carota (Wild carrot).